We begin with the raw amino-acid sequence, 579 residues long: MNIIQSFTHRLSDLIKQYPLAMSFIFISTAFIPWIQDESISRDMIVVLLLPIYFSTVLLLNKRKYANGLAIAYAILITLAFYFAERPIYDNDAYWGLLLIHFVLFVTYPLAKENRLFVYNTVSRLTQLALAIVLAGIICICAVLVLNSIEYLFNINLLSYRIVPKTLLFIMCFFTPVFFLIFEQRLAQNFQGERFHYVIELIVNFIFSPVVILYTLIVYLYLAKILFYFELPKGGVAYIIMPYIALGLCCQGLRLLLIDAKWTGFYRVFAYLSIAPLVLLWVGIHTRITTYGLTEIRVMLVVLASMMTLFILFSMTQRLQQYRLFSLTACLLLFISTILTSPYYLAQQHQLARFERLLSELNILDEQQQISATIFDSQFAKQLSSEQVEKYKQLEEIIGGYIKTNPVAVAKYGQEKLNYLHGFYYNQIIYNTPYQDEEASITFYAYDTRRQDNYTIDIAPYQTLHLINGYVNSGDPNERETQTQETSTLFQRQFDLIDKHNKYSFDEHYFVEVFKAAGLDIHQKYSQDTLLPLAKELTQVPTREGGLLIFRDMDFKYEVHGDIKGYVYQGGYIEFYLAP.

Helical transmembrane passes span aspartate 13 to isoleucine 35, serine 39 to asparagine 61, alanine 66 to phenylalanine 83, alanine 93 to leucine 110, leucine 130 to leucine 152, isoleucine 162 to isoleucine 181, leucine 201 to alanine 223, tyrosine 238 to leucine 257, glycine 264 to threonine 286, isoleucine 296 to methionine 315, and leucine 324 to alanine 346.

It localises to the cell membrane. This is an uncharacterized protein from Pasteurella multocida (strain Pm70).